The following is a 525-amino-acid chain: MSL complex subunit 3 (525 aa).

A Tudor-knot domain is found at 13-72 (SGEKVLCFEPDPTKARVLYDAKIIDVIIGKDEKGRKIPEYLIHFNGWNRSWDRWAAEEHV). Disordered stretches follow at residues 119 to 148 (KEKSKNDENSVSSTCHESCGEKNGGIKEHR) and 302 to 383 (TTTT…DTSA). The segment covering 136 to 146 (SCGEKNGGIKE) has biased composition (basic and acidic residues). The MRG domain maps to 172-521 (DERTITIDIP…CEAHYSTKNP (350 aa)). A required for the histone acetyltransferase activity of the MSL complex region spans residues 294–444 (FFLPIKESTT…WKLVPDNYPP (151 aa)). Serine 313 and serine 315 each carry phosphoserine. Residues 320-332 (NPSTPQSTESQPP) show a composition bias toward low complexity. Phosphoserine is present on residues serine 371 and serine 404. A Phosphothreonine modification is found at threonine 409. Phosphoserine occurs at positions 411 and 415.

As to quaternary structure, component of the MSL histone acetyltransferase complex at least composed of the KAT8/MOF, MSL1/hampin, MSL2 and MSL3. Interacts (via the MRG domain) with MSL1 and KAT8/MOF. In testis, expression is mostly restricted to the spermatocyte stage and only in a small portion of spermatogonia.

The protein resides in the nucleus. Its function is as follows. Non-catalytic component of the MSL histone acetyltransferase complex, a multiprotein complex that mediates the majority of histone H4 acetylation at 'Lys-16' (H4K16ac), an epigenetic mark that prevents chromatin compaction. The MSL complex is required for chromosome stability and genome integrity by maintaining homeostatic levels of H4K16ac. The MSL complex is also involved in gene dosage by promoting up-regulation of genes expressed by the X chromosome. X up-regulation is required to compensate for autosomal biallelic expression. The MSL complex also participates in gene dosage compensation by promoting expression of Tsix non-coding RNA. Acts as a histone reader that specifically recognizes and binds histone H4 monomethylated at 'Lys-20' (H4K20Me1) in a DNA-dependent manner and is proposed to be involved in chromosomal targeting of the MSL complex. May play a role X inactivation in females. The protein is MSL complex subunit 3 of Mus musculus (Mouse).